A 104-amino-acid polypeptide reads, in one-letter code: MSHTILLVQPTKRPEGRTYADYESVNECMEGVCKMYEEHLKRMNPNSPSITYDISQLFDFIDDLADLSCLVYRADTQTYQPYNKDWIKEKIYVLLRRQAQQAGK.

S2 carries the post-translational modification N-acetylserine. T11 is modified (phosphothreonine). A Glycyl lysine isopeptide (Lys-Gly) (interchain with G-Cter in SUMO2) cross-link involves residue K12.

It belongs to the E(R) family. Homodimer.

The protein resides in the nucleus. May have a role in the cell cycle. The chain is Enhancer of rudimentary homolog (ERH) from Bos taurus (Bovine).